Reading from the N-terminus, the 392-residue chain is Neutrophil cytosol factor 1 (392 aa).

The PX domain occupies 4 to 125 (HFIRHIALLG…NFFKVRPDDL (122 aa)). 2 SH3 domains span residues 156–215 (IILQ…PLDS) and 226–285 (YAGE…KAGQ). Residues 290-392 (AKSQIKSRGA…STKRKLASAV (103 aa)) form a disordered region. A phosphoserine mark is found at Ser-304 and Ser-305. Basic residues predominate over residues 310 to 319 (HSIHQRSRKR). Ser-321, Ser-329, and Ser-348 each carry phosphoserine. Residues 376–385 (ILHRCSESTK) show a composition bias toward basic and acidic residues.

Component of the phagocyte NADPH oxidase complex composed of an obligatory core heterodimer formed by the membrane proteins CYBA and CYBB and the cytosolic regulatory subunits NCF1/p47-phox, NCF2/p67-phox, NCF4/p40-phox and the small GTPase RAC1 or RAC2. Part of a cytosolic complex composed at least by NCF1, NCF2 and NCF4. Interacts (via C-terminus) with NCF2 (via the C-terminal SH3 domain). Interacts with NCF4. Interacts with CYBB. Interacts (via the second SH3 domain) with CYBA; interaction is phosphorylation-dependent. Interacts with NOXA1. Interacts with ADAM15. Interacts with TRAF4. Interacts with FASLG. Interacts with PARK7 (via C-terminus); the interaction is enhanced by LPS and modulates NCF1 phosphorylation and membrane translocation. Phosphorylated by PRKCD; phosphorylation induces activation of NCF1, leading to assembly and activation of the NADPH oxidase complex.

Its subcellular location is the cytoplasm. The protein resides in the cytosol. It is found in the membrane. In terms of biological role, subunit of the phagocyte NADPH oxidase complex that mediates the transfer of electrons from cytosolic NADPH to O2 to produce the superoxide anion (O2(-)). In the activated complex, electrons are first transferred from NADPH to flavin adenine dinucleotide (FAD) and subsequently transferred via two heme molecules to molecular oxygen, producing superoxide through an outer-sphere reaction. Activation of the NADPH oxidase complex is initiated by the assembly of cytosolic subunits of the NADPH oxidase complex with the core NADPH oxidase complex to form a complex at the plasma membrane or phagosomal membrane. This activation process is initiated by phosphorylation dependent binding of the cytosolic NCF1/p47-phox subunit to the C-terminus of CYBA/p22-phox. The chain is Neutrophil cytosol factor 1 from Bos taurus (Bovine).